The following is a 255-amino-acid chain: Putative mediator of RNA polymerase II transcription subunit 30 (255 aa).

A compositionally biased stretch (low complexity) spans 58-107 (QSQQLQQPQSIPSSTNNSTNTNTNNSTTTTTTSSTSSTTTPTTTTSTTSP). Disordered stretches follow at residues 58 to 133 (QSQQ…TLNL) and 177 to 207 (NIDNDDTIMKDDNNNSSTSAPTTTTINIEKQ). A compositionally biased stretch (polar residues) spans 108–133 (LNSKDSTATTTTKEQPSSPTLPTLNL). Over residues 177–189 (NIDNDDTIMKDDN) the composition is skewed to basic and acidic residues. Over residues 190 to 201 (NNSSTSAPTTTT) the composition is skewed to low complexity.

This sequence belongs to the Mediator complex subunit 30 family. Highly divergent. In terms of assembly, component of the Mediator complex.

Its subcellular location is the nucleus. Its function is as follows. Component of the Mediator complex, a coactivator involved in the regulated transcription of nearly all RNA polymerase II-dependent genes. Mediator functions as a bridge to convey information from gene-specific regulatory proteins to the basal RNA polymerase II transcription machinery. Mediator is recruited to promoters by direct interactions with regulatory proteins and serves as a scaffold for the assembly of a functional preinitiation complex with RNA polymerase II and the general transcription factors. The polypeptide is Putative mediator of RNA polymerase II transcription subunit 30 (med30) (Dictyostelium discoideum (Social amoeba)).